The primary structure comprises 408 residues: Imidazolonepropionase (408 aa).

Fe(3+) contacts are provided by H73 and H75. H73 and H75 together coordinate Zn(2+). Residues R82, Y145, and H178 each coordinate 4-imidazolone-5-propanoate. Y145 contacts N-formimidoyl-L-glutamate. Position 243 (H243) interacts with Fe(3+). H243 serves as a coordination point for Zn(2+). Q246 is a 4-imidazolone-5-propanoate binding site. D318 is a Fe(3+) binding site. Position 318 (D318) interacts with Zn(2+). N-formimidoyl-L-glutamate-binding residues include N320 and G322. 4-imidazolone-5-propanoate is bound at residue S323.

This sequence belongs to the metallo-dependent hydrolases superfamily. HutI family. Zn(2+) is required as a cofactor. Requires Fe(3+) as cofactor.

It is found in the cytoplasm. It carries out the reaction 4-imidazolone-5-propanoate + H2O = N-formimidoyl-L-glutamate. It participates in amino-acid degradation; L-histidine degradation into L-glutamate; N-formimidoyl-L-glutamate from L-histidine: step 3/3. In terms of biological role, catalyzes the hydrolytic cleavage of the carbon-nitrogen bond in imidazolone-5-propanoate to yield N-formimidoyl-L-glutamate. It is the third step in the universal histidine degradation pathway. This is Imidazolonepropionase from Shewanella sp. (strain MR-4).